The sequence spans 85 residues: Transcriptional repressor protein KorC (85 aa).

The H-T-H motif DNA-binding region spans 28 to 47 (VLHLAGLTGGQAARILGLGA).

Acts with KorA as corepressor in the control of the kilC and kilE operons. The protein is Transcriptional repressor protein KorC (korC) of Escherichia coli.